The primary structure comprises 139 residues: MGKVNKTDREWQRELSPEEYRITRQKGTEPAFTGQYWNTKQHGTYVCRCCGAELFSSDAKYDSGCGWPSFFRPLNGSVIDEHEDLTHGMVRTEIVCHDCEAHLGHVFEDGPQPTGLRYCVNSASLQLKTQEKNDEETYP.

The region spanning 8 to 130 is the MsrB domain; the sequence is DREWQRELSP…NSASLQLKTQ (123 aa). Zn(2+) is bound by residues C47, C50, C96, and C99. The active-site Nucleophile is C119.

The protein belongs to the MsrB Met sulfoxide reductase family. Requires Zn(2+) as cofactor.

It catalyses the reaction L-methionyl-[protein] + [thioredoxin]-disulfide + H2O = L-methionyl-(R)-S-oxide-[protein] + [thioredoxin]-dithiol. This chain is Peptide methionine sulfoxide reductase MsrB, found in Acinetobacter baumannii (strain AB307-0294).